Here is a 279-residue protein sequence, read N- to C-terminus: uncharacterized protein (279 aa).

This is an uncharacterized protein from Borreliella burgdorferi (strain ATCC 35210 / DSM 4680 / CIP 102532 / B31) (Borrelia burgdorferi).